Consider the following 413-residue polypeptide: Elongation factor 1-alpha (413 aa).

Residues 5-211 (KTHMNLAFIG…DALDEPDKPV (207 aa)) form the tr-type G domain. The G1 stretch occupies residues 14-21 (GHVDHGKS). Residue 14 to 21 (GHVDHGKS) coordinates GTP. Residue Ser-21 coordinates Mg(2+). Residues 60–64 (GVTID) are G2. The segment at 81-84 (DCPG) is G3. GTP-binding positions include 81-85 (DCPGH) and 136-139 (NKMD). Positions 136-139 (NKMD) are G4. Residues 175–177 (SAF) are G5.

The protein belongs to the TRAFAC class translation factor GTPase superfamily. Classic translation factor GTPase family. EF-Tu/EF-1A subfamily.

The protein resides in the cytoplasm. The catalysed reaction is GTP + H2O = GDP + phosphate + H(+). GTP hydrolase that promotes the GTP-dependent binding of aminoacyl-tRNA to the A-site of ribosomes during protein biosynthesis. The protein is Elongation factor 1-alpha of Methanosphaera stadtmanae (strain ATCC 43021 / DSM 3091 / JCM 11832 / MCB-3).